The chain runs to 139 residues: Large ribosomal subunit protein uL16 (139 aa).

A compositionally biased stretch (basic residues) spans Met-1–Gly-16. The interval Met-1–Thr-25 is disordered.

Belongs to the universal ribosomal protein uL16 family. In terms of assembly, part of the 50S ribosomal subunit.

Binds 23S rRNA and is also seen to make contacts with the A and possibly P site tRNAs. In Leifsonia xyli subsp. xyli (strain CTCB07), this protein is Large ribosomal subunit protein uL16.